The sequence spans 749 residues: Chaperone protein DnaK 1 (749 aa).

A Phosphothreonine; by autocatalysis modification is found at T198. Composition is skewed to basic and acidic residues over residues 643–653 (RWDADPWDRSR), 661–694 (YDDRRSPVSDPYRGERWVEEQTSMSRREPVRDRN), and 711–724 (PTWEEDQPPRRDRS). A disordered region spans residues 643–749 (RWDADPWDRS…GWDDDDDEWF (107 aa)). Residues 740 to 749 (GWDDDDDEWF) show a composition bias toward acidic residues.

The protein belongs to the heat shock protein 70 family.

Acts as a chaperone. The polypeptide is Chaperone protein DnaK 1 (Synechococcus sp. (strain ATCC 27144 / PCC 6301 / SAUG 1402/1) (Anacystis nidulans)).